The chain runs to 396 residues: Methionine import ATP-binding protein MetN 2 (396 aa).

The 240-residue stretch at 41 to 280 (VSFELVGKVF…PRHGATRALL (240 aa)) folds into the ABC transporter domain. Residue 77–84 (GRSGAGKS) coordinates ATP.

Belongs to the ABC transporter superfamily. Methionine importer (TC 3.A.1.24) family. In terms of assembly, the complex is composed of two ATP-binding proteins (MetN), two transmembrane proteins (MetI) and a solute-binding protein (MetQ).

The protein resides in the cell inner membrane. The enzyme catalyses L-methionine(out) + ATP + H2O = L-methionine(in) + ADP + phosphate + H(+). It carries out the reaction D-methionine(out) + ATP + H2O = D-methionine(in) + ADP + phosphate + H(+). In terms of biological role, part of the ABC transporter complex MetNIQ involved in methionine import. Responsible for energy coupling to the transport system. The chain is Methionine import ATP-binding protein MetN 2 from Burkholderia pseudomallei (strain K96243).